Reading from the N-terminus, the 166-residue chain is Bacterial non-heme ferritin (166 aa).

A Ferritin-like diiron domain is found at 2–145; the sequence is LSKNLLEALN…THINYLTRIG (144 aa). The Fe cation site is built by glutamate 17, glutamate 50, histidine 53, glutamate 94, and glutamine 127.

This sequence belongs to the ferritin family. Prokaryotic subfamily.

It localises to the cytoplasm. The catalysed reaction is 4 Fe(2+) + O2 + 6 H2O = 4 iron(III) oxide-hydroxide + 12 H(+). Iron-storage protein. In Staphylococcus aureus (strain USA300), this protein is Bacterial non-heme ferritin (ftnA).